A 245-amino-acid chain; its full sequence is Cysteine-rich secretory protein 3 (245 aa).

Positions 1–20 (MTLFPVLLFLVAGLLPSFPA) are cleaved as a signal peptide. In terms of domain architecture, SCP spans 43-171 (VNKHNELRRA…VLKYYYVCQY (129 aa)). 5 disulfides stabilise this stretch: cysteine 191–cysteine 198, cysteine 194–cysteine 203, cysteine 207–cysteine 240, cysteine 216–cysteine 234, and cysteine 225–cysteine 238. In terms of domain architecture, ShKT spans 207 to 240 (CKYEDLYSNCKSLKLTLTCKHQLVRDSCKASCNC). Residue asparagine 239 is glycosylated (N-linked (GlcNAc...) asparagine).

This sequence belongs to the CRISP family. Interacts with A1BG. As to expression, salivary gland, pancreas and prostate &gt; epididymis, ovary, thymus and colon.

Its subcellular location is the secreted. The sequence is that of Cysteine-rich secretory protein 3 (CRISP3) from Homo sapiens (Human).